A 474-amino-acid polypeptide reads, in one-letter code: ATP synthase subunit beta 2 (474 aa).

157–164 is an ATP binding site; that stretch reads GGAGVGKT.

The protein belongs to the ATPase alpha/beta chains family. In terms of assembly, F-type ATPases have 2 components, CF(1) - the catalytic core - and CF(0) - the membrane proton channel. CF(1) has five subunits: alpha(3), beta(3), gamma(1), delta(1), epsilon(1). CF(0) has three main subunits: a(1), b(2) and c(9-12). The alpha and beta chains form an alternating ring which encloses part of the gamma chain. CF(1) is attached to CF(0) by a central stalk formed by the gamma and epsilon chains, while a peripheral stalk is formed by the delta and b chains.

It is found in the cell inner membrane. The catalysed reaction is ATP + H2O + 4 H(+)(in) = ADP + phosphate + 5 H(+)(out). In terms of biological role, produces ATP from ADP in the presence of a proton gradient across the membrane. The catalytic sites are hosted primarily by the beta subunits. The sequence is that of ATP synthase subunit beta 2 from Polaromonas naphthalenivorans (strain CJ2).